Consider the following 154-residue polypeptide: Oleosin 16.4 kDa (154 aa).

Position 2 is an N-acetylalanine (Ala-2). The tract at residues Ala-2 to Thr-33 is polar. 3 consecutive transmembrane segments (helical) span residues Val-31–Thr-51, Leu-65–Ala-85, and Gly-86–Asn-106. A hydrophobic region spans residues Val-34–Phe-105.

It belongs to the oleosin family.

Its subcellular location is the lipid droplet. It is found in the membrane. May have a structural role to stabilize the lipid body during desiccation of the seed by preventing coalescence of the oil. Probably interacts with both lipid and phospholipid moieties of lipid bodies. May also provide recognition signals for specific lipase anchorage in lipolysis during seedling growth. The sequence is that of Oleosin 16.4 kDa (MATP7) from Gossypium hirsutum (Upland cotton).